The following is a 435-amino-acid chain: Manganese transport system membrane protein MntC (435 aa).

9 consecutive transmembrane segments (helical) span residues 17–37 (VLAGTLLLGTASGVLGSFVLL), 42–62 (LIGDAMAHSALPGVCLAFLFT), 68–88 (PFFLLGAALAGLLGTFCIQLI), 98–118 (SAIGIVLSVFFGVGIILLTYI), 143–163 (QDIILIAGISAVLLLLCIVFF), 166–186 (FTLITFDLAFAKGLGIPVRFL), 189–209 (LLACLIVCAVVIGLQTVGVIL), 228–248 (LTGMIIIAGITGGVSGVAGTL), and 255–275 (GMATGPLMILSATLLFLFSMI).

This sequence belongs to the ABC-3 integral membrane protein family. As to quaternary structure, the complex is probably composed of two ATP-binding proteins (MntB), two transmembrane proteins (MntC and MntD) and a solute-binding protein (MntA).

It is found in the cell membrane. In terms of biological role, probably part of the ABC transporter complex MntABCD involved in manganese import. Probably responsible for the translocation of the substrate across the membrane. In Bacillus subtilis (strain 168), this protein is Manganese transport system membrane protein MntC.